The primary structure comprises 121 residues: Small ribosomal subunit protein uS13 (121 aa).

Residues 93–121 are disordered; that stretch reads RGLPMRGQRTRTNARTRKGPRKGAAALKK.

Belongs to the universal ribosomal protein uS13 family. Part of the 30S ribosomal subunit. Forms a loose heterodimer with protein S19. Forms two bridges to the 50S subunit in the 70S ribosome.

Its function is as follows. Located at the top of the head of the 30S subunit, it contacts several helices of the 16S rRNA. In the 70S ribosome it contacts the 23S rRNA (bridge B1a) and protein L5 of the 50S subunit (bridge B1b), connecting the 2 subunits; these bridges are implicated in subunit movement. Contacts the tRNAs in the A and P-sites. The chain is Small ribosomal subunit protein uS13 from Paracidovorax citrulli (strain AAC00-1) (Acidovorax citrulli).